The chain runs to 280 residues: MTEEKKENQKIVNLIIISDSVGDTAFNMVQAGAVQYPNVKFNYRRYPFITNREKLEKVFSEITEFENVLIAFTLIHEDEQLAVIKFAREHNMKYVDLLSGVIDNIHALTGEEPKHEIGAVHHMGQNYFDRISAMEFAVMYDDGKDPKGFLEADVVLLGVSRTSKTPLSLFLANKNLKVANLPLVPQTHIPDEIYKINPKKIIGLTNDPSVLNEIRRQRMIAYGLNPDTTYSNMDSINAELEAADKLYKKLGCYVINVAHRSIEETAALILEHLGIDDYAK.

Residue 158–165 (GVSRTSKT) coordinates ADP.

It belongs to the pyruvate, phosphate/water dikinase regulatory protein family. PDRP subfamily.

The catalysed reaction is N(tele)-phospho-L-histidyl/L-threonyl-[pyruvate, phosphate dikinase] + ADP = N(tele)-phospho-L-histidyl/O-phospho-L-threonyl-[pyruvate, phosphate dikinase] + AMP + H(+). It carries out the reaction N(tele)-phospho-L-histidyl/O-phospho-L-threonyl-[pyruvate, phosphate dikinase] + phosphate + H(+) = N(tele)-phospho-L-histidyl/L-threonyl-[pyruvate, phosphate dikinase] + diphosphate. In terms of biological role, bifunctional serine/threonine kinase and phosphorylase involved in the regulation of the pyruvate, phosphate dikinase (PPDK) by catalyzing its phosphorylation/dephosphorylation. The protein is Putative pyruvate, phosphate dikinase regulatory protein of Lactobacillus johnsonii (strain CNCM I-12250 / La1 / NCC 533).